Reading from the N-terminus, the 404-residue chain is Cysteine desulfurase IscS (404 aa).

Residues 75–76, Asn-155, Gln-183, and 203–205 contribute to the pyridoxal 5'-phosphate site; these read AT and SAH. Lys-206 is modified (N6-(pyridoxal phosphate)lysine). Thr-243 serves as a coordination point for pyridoxal 5'-phosphate. The active-site Cysteine persulfide intermediate is Cys-328. Cys-328 contacts [2Fe-2S] cluster.

Belongs to the class-V pyridoxal-phosphate-dependent aminotransferase family. NifS/IscS subfamily. As to quaternary structure, homodimer. Forms a heterotetramer with IscU, interacts with other sulfur acceptors. The cofactor is pyridoxal 5'-phosphate.

It localises to the cytoplasm. It catalyses the reaction (sulfur carrier)-H + L-cysteine = (sulfur carrier)-SH + L-alanine. It functions in the pathway cofactor biosynthesis; iron-sulfur cluster biosynthesis. In terms of biological role, master enzyme that delivers sulfur to a number of partners involved in Fe-S cluster assembly, tRNA modification or cofactor biosynthesis. Catalyzes the removal of elemental sulfur atoms from cysteine to produce alanine. Functions as a sulfur delivery protein for Fe-S cluster synthesis onto IscU, an Fe-S scaffold assembly protein, as well as other S acceptor proteins. This Pseudomonas syringae pv. syringae (strain B728a) protein is Cysteine desulfurase IscS.